The following is a 505-amino-acid chain: Flagellin (505 aa).

The protein belongs to the bacterial flagellin family.

The protein resides in the secreted. It is found in the bacterial flagellum. In terms of biological role, flagellin is the subunit protein which polymerizes to form the filaments of bacterial flagella. In Salmonella moscow, this protein is Flagellin (fliC).